Here is a 351-residue protein sequence, read N- to C-terminus: Signal recognition particle receptor FtsY (351 aa).

Residues 152-159, 235-239, and 299-302 contribute to the GTP site; these read GVNGSGKT, DTAGR, and TKMD.

It belongs to the GTP-binding SRP family. FtsY subfamily. As to quaternary structure, part of the signal recognition particle protein translocation system, which is composed of SRP and FtsY.

Its subcellular location is the cell membrane. It localises to the cytoplasm. The enzyme catalyses GTP + H2O = GDP + phosphate + H(+). Functionally, involved in targeting and insertion of nascent membrane proteins into the cytoplasmic membrane. Acts as a receptor for the complex formed by the signal recognition particle (SRP) and the ribosome-nascent chain (RNC). The protein is Signal recognition particle receptor FtsY of Metamycoplasma hominis (strain ATCC 23114 / DSM 25592 / NBRC 14850 / NCTC 10111 / PG21) (Mycoplasma hominis).